The primary structure comprises 341 residues: Protein DOWNY MILDEW RESISTANCE 6 (341 aa).

The Fe2OG dioxygenase domain occupies 188 to 288 (QGQHMAVNYY…RLSVASFLCP (101 aa)). The Fe cation site is built by His212, Asp214, and His269. Arg279 is a 2-oxoglutarate binding site.

Belongs to the iron/ascorbate-dependent oxidoreductase family. The cofactor is Fe(2+).

The enzyme catalyses salicylate + NADH + O2 + H(+) = 2,3-dihydroxybenzoate + NAD(+) + H2O. In terms of biological role, converts salicylic acid (SA) to 2,3-dihydroxybenzoic acid (2,3-DHBA). Suppressor of immunity. Regulates negatively defense associated genes expression (e.g. PR-1, PR-2, and PR-5). Negative regulator of defense against Hyaloperonospora arabidopsidis. Its function is as follows. (Microbial infection) Required for susceptibility to the downy mildew pathogen Hyaloperonospora arabidopsidis. Functionally, (Microbial infection) Required for susceptibility to Pseudomonas syringae pv. tomato DC3000. (Microbial infection) Required for susceptibility to the oomycete Phytophthora capsici. This chain is Protein DOWNY MILDEW RESISTANCE 6, found in Arabidopsis thaliana (Mouse-ear cress).